The following is a 444-amino-acid chain: Tol-Pal system protein TolB (444 aa).

A signal peptide spans 1 to 18; that stretch reads MRNIIYFILLLFSCTGYA.

The protein belongs to the TolB family. The Tol-Pal system is composed of five core proteins: the inner membrane proteins TolA, TolQ and TolR, the periplasmic protein TolB and the outer membrane protein Pal. They form a network linking the inner and outer membranes and the peptidoglycan layer.

The protein localises to the periplasm. Its function is as follows. Part of the Tol-Pal system, which plays a role in outer membrane invagination during cell division and is important for maintaining outer membrane integrity. The chain is Tol-Pal system protein TolB from Rickettsia canadensis (strain McKiel).